Reading from the N-terminus, the 407-residue chain is Arginine biosynthesis bifunctional protein ArgJ (407 aa).

Substrate is bound by residues Thr154, Lys180, Thr191, Glu278, Asn402, and Ser407. Thr191 serves as the catalytic Nucleophile.

The protein belongs to the ArgJ family. As to quaternary structure, heterotetramer of two alpha and two beta chains.

The protein resides in the cytoplasm. It catalyses the reaction N(2)-acetyl-L-ornithine + L-glutamate = N-acetyl-L-glutamate + L-ornithine. The catalysed reaction is L-glutamate + acetyl-CoA = N-acetyl-L-glutamate + CoA + H(+). The protein operates within amino-acid biosynthesis; L-arginine biosynthesis; L-ornithine and N-acetyl-L-glutamate from L-glutamate and N(2)-acetyl-L-ornithine (cyclic): step 1/1. Its pathway is amino-acid biosynthesis; L-arginine biosynthesis; N(2)-acetyl-L-ornithine from L-glutamate: step 1/4. Functionally, catalyzes two activities which are involved in the cyclic version of arginine biosynthesis: the synthesis of N-acetylglutamate from glutamate and acetyl-CoA as the acetyl donor, and of ornithine by transacetylation between N(2)-acetylornithine and glutamate. The polypeptide is Arginine biosynthesis bifunctional protein ArgJ (Psychrobacter arcticus (strain DSM 17307 / VKM B-2377 / 273-4)).